Here is a 140-residue protein sequence, read N- to C-terminus: Large ribosomal subunit protein bL17 (140 aa).

The protein belongs to the bacterial ribosomal protein bL17 family. Part of the 50S ribosomal subunit. Contacts protein L32.

The polypeptide is Large ribosomal subunit protein bL17 (Paracoccus denitrificans (strain Pd 1222)).